The primary structure comprises 91 residues: UPF0358 protein SERP0701 (91 aa).

Belongs to the UPF0358 family.

This chain is UPF0358 protein SERP0701, found in Staphylococcus epidermidis (strain ATCC 35984 / DSM 28319 / BCRC 17069 / CCUG 31568 / BM 3577 / RP62A).